Here is a 1057-residue protein sequence, read N- to C-terminus: Glycine dehydrogenase (decarboxylating), mitochondrial (1057 aa).

The N-terminal 86 residues, 1–86, are a transit peptide targeting the mitochondrion; that stretch reads MERARRLANR…GVGYPSQSRS (86 aa). Basic and acidic residues predominate over residues 18–27; that stretch reads SEAKQNRKTE. The tract at residues 18–47 is disordered; the sequence is SEAKQNRKTESTSTTTTTPLPFSLSGSSSR. Low complexity predominate over residues 28–47; sequence STSTTTTTPLPFSLSGSSSR. Position 792 is an N6-(pyridoxal phosphate)lysine (K792).

The protein belongs to the GcvP family. Homodimer. The glycine cleavage system is composed of four proteins: P, T, L and H. Pyridoxal 5'-phosphate serves as cofactor. Highly expressed in leaves. Detected in roots and embryos.

The protein resides in the mitochondrion. The enzyme catalyses N(6)-[(R)-lipoyl]-L-lysyl-[glycine-cleavage complex H protein] + glycine + H(+) = N(6)-[(R)-S(8)-aminomethyldihydrolipoyl]-L-lysyl-[glycine-cleavage complex H protein] + CO2. Functionally, the glycine cleavage system catalyzes the degradation of glycine. The P protein binds the alpha-amino group of glycine through its pyridoxal phosphate cofactor; CO(2) is released and the remaining methylamine moiety is then transferred to the lipoamide cofactor of the H protein. The polypeptide is Glycine dehydrogenase (decarboxylating), mitochondrial (GDCSP) (Pisum sativum (Garden pea)).